A 36-amino-acid chain; its full sequence is uncharacterized protein (36 aa).

This is an uncharacterized protein from Archaeoglobus fulgidus (strain ATCC 49558 / DSM 4304 / JCM 9628 / NBRC 100126 / VC-16).